The following is a 156-amino-acid chain: Anaerobic ribonucleoside-triphosphate reductase-activating protein (156 aa).

Cys-26, Cys-30, and Cys-33 together coordinate [4Fe-4S] cluster. S-adenosyl-L-methionine is bound by residues 32–34 (GCY) and Gly-72.

Belongs to the organic radical-activating enzymes family. In terms of assembly, forms a tetramer composed of two NrdD and two NrdG subunits. The cofactor is [4Fe-4S] cluster.

It carries out the reaction glycyl-[protein] + reduced [flavodoxin] + S-adenosyl-L-methionine = glycin-2-yl radical-[protein] + semiquinone [flavodoxin] + 5'-deoxyadenosine + L-methionine + H(+). Its function is as follows. Activation of anaerobic ribonucleoside-triphosphate reductase under anaerobic conditions by generation of an organic free radical, using S-adenosylmethionine and reduced flavodoxin as cosubstrates to produce 5'-deoxy-adenosine. In Escherichia coli (Bacteriophage T4), this protein is Anaerobic ribonucleoside-triphosphate reductase-activating protein (NRDG).